The sequence spans 273 residues: Nitrogenase iron protein (273 aa).

8–15 (GKGGIGKS) lines the ATP pocket. Cys-94 provides a ligand contact to [4Fe-4S] cluster. An ADP-ribosylarginine; by dinitrogenase reductase ADP-ribosyltransferase modification is found at Arg-97. Cys-130 is a binding site for [4Fe-4S] cluster.

It belongs to the NifH/BchL/ChlL family. In terms of assembly, homodimer. [4Fe-4S] cluster serves as cofactor. Post-translationally, the reversible ADP-ribosylation of Arg-97 inactivates the nitrogenase reductase and regulates nitrogenase activity.

The catalysed reaction is N2 + 8 reduced [2Fe-2S]-[ferredoxin] + 16 ATP + 16 H2O = H2 + 8 oxidized [2Fe-2S]-[ferredoxin] + 2 NH4(+) + 16 ADP + 16 phosphate + 6 H(+). The key enzymatic reactions in nitrogen fixation are catalyzed by the nitrogenase complex, which has 2 components: the iron protein and the molybdenum-iron protein. This is Nitrogenase iron protein from Desulforapulum autotrophicum (strain ATCC 43914 / DSM 3382 / VKM B-1955 / HRM2) (Desulfobacterium autotrophicum).